The following is a 515-amino-acid chain: Mucin-like protein Glc1.8a (515 aa).

An N-terminal signal peptide occupies residues 1 to 20 (MSQITLIILILAIGFSCTKS). Residues 21–467 (HPINSTRDGE…ANDIKKPAFP (447 aa)) lie on the Extracellular side of the membrane. N-linked (GlcNAc...) asparagine; by host glycans are attached at residues asparagine 24, asparagine 45, asparagine 51, asparagine 60, asparagine 85, asparagine 93, asparagine 102, asparagine 123, asparagine 129, asparagine 138, asparagine 180, asparagine 201, asparagine 207, asparagine 216, asparagine 258, asparagine 279, asparagine 285, asparagine 319, asparagine 327, asparagine 336, asparagine 357, asparagine 363, asparagine 372, asparagine 397, asparagine 405, asparagine 413, asparagine 434, and asparagine 441. The interval 80–114 (SKKDENITGQSEINTSAKSQPINSTRDGEDSGTDL) is disordered. A compositionally biased stretch (polar residues) spans 86–104 (ITGQSEINTSAKSQPINST). Residues 314-358 (SKKDENVTGQSEINTSAKSQPINSTRDGEDSGTDLKNLLTDPANT) form a disordered region. The segment covering 320-338 (VTGQSEINTSAKSQPINST) has biased composition (polar residues). Positions 393–413 (RKDENVTGQSEFNISTNSNLN) are disordered. A helical membrane pass occupies residues 468-488 (YCIILITFQIVTVGMIIYLVF). The Cytoplasmic portion of the chain corresponds to 489–515 (RTMRKPCQSERAIPLNTFGFGNNSSHE).

This sequence belongs to the polydnaviridae Glc1.8 protein family.

It is found in the host membrane. Its function is as follows. Involved in suppression of the insect cellular immune response. Inhibits host hemocyte adhesion and phagocytosis. The protein is Mucin-like protein Glc1.8a (O9) of Microplitis demolitor (Parasitoid wasp).